The primary structure comprises 170 residues: Neurotensin/neuromedin N (170 aa).

A signal peptide spans 1 to 23 (MMAGMKIQLVCMLLLAFSSWSLC). Gln-151 is subject to Pyrrolidone carboxylic acid.

This sequence belongs to the neurotensin family. In terms of assembly, interacts with NTSR1. Interacts with SORT1. Interacts with SORL1. In terms of processing, neurotensin is cleaved and degraded by Angiotensin-converting enzyme (ACE) and neprilysin (MME).

It is found in the secreted. The protein resides in the cytoplasmic vesicle. Its subcellular location is the secretory vesicle. Functionally, neurotensin may play an endocrine or paracrine role in the regulation of fat metabolism. It causes contraction of smooth muscle. The polypeptide is Neurotensin/neuromedin N (NTS) (Homo sapiens (Human)).